We begin with the raw amino-acid sequence, 169 residues long: Photosystem I assembly protein Ycf3 (169 aa).

3 TPR repeats span residues 35–68 (AFTYYRDGMSAQSEGEYAEALQNYYEAMRLETDP), 72–105 (SYILYNIGLVHTSNGEHTKALEYYFQALERNPSL), and 120–153 (GEQAIRQGDPETAEAWFDQAAEYWEQAIALAPGN).

Belongs to the Ycf3 family.

It is found in the plastid. The protein localises to the chloroplast thylakoid membrane. Functionally, essential for the assembly of the photosystem I (PSI) complex. May act as a chaperone-like factor to guide the assembly of the PSI subunits. The protein is Photosystem I assembly protein Ycf3 of Pinus koraiensis (Korean pine).